Reading from the N-terminus, the 422-residue chain is MPGATSHVPLLSVVIPTYNRAALLDRTLGTLARQTTALEDFEVVVSDDGSTDTTRDVVRSYEDRLRIKYVFQEDLGYRVASARNGGARLASAPLLAFLDTGVLAGPQYVQSVLAAHAGPAPAKVVLGCCYGYDPRNPHPELHSLVEEFPPEEAVRRVGDAPWFQDMRLPEFTAVDFDLSRMHMPWLWFWTLNVSLPAADFWRVGGFDEDFTGWGGEDIELGYRLHAHGIPMTVSRESWGIEAPHERTHEANVSSLMLNCDRFVRKHPSLLPELFWAVTNRGIFGSVETERLRFEEWASQARGQQVLDEIAIGLDTLPPSQHTQRVAVFGSGTEGLPITPRQNVELFLCDYDEGVLARQESRDDAAVSTWHLSGLRTPWPDQHFDLVIITSRMDGPRQAWGEAFTKEAHRIASSVVEPSLRGD.

It belongs to the glycosyltransferase 2 family. Mn(2+) serves as cofactor.

It catalyses the reaction validoxylamine A + UDP-alpha-D-glucose = validamycin A + UDP + H(+). Functionally, involved in the biosynthesis of the antifungal agent validamycin A. Catalyzes the final attachment of glucose from UDP-alpha-D-glucose to validoxylamine A to yield validamycin A. UDP-glucose is the most efficient glycosyl donor, whereas GDP-glucose and ADP-glucose are much less efficient. ValG also utilizes UDP-galactose as substrate to produce the new validamycin analog, 4''-epi-validamycin A. The chain is Validoxylamine A glucosyltransferase from Streptomyces hygroscopicus subsp. jinggangensis (strain 5008).